The chain runs to 318 residues: uncharacterized protein (318 aa).

A compositionally biased stretch (basic and acidic residues) spans 1–22; it reads MKASQERSEARRTAHSVKEKKY. 2 disordered regions span residues 1–29 and 293–318; these read MKAS…ASPR and DDGD…DDDE.

This is an uncharacterized protein from Ictalurid herpesvirus 1 (strain Auburn) (IcHV-1).